We begin with the raw amino-acid sequence, 380 residues long: Glucose-1-phosphate adenylyltransferase (380 aa).

Residues Tyr100, Gly165, 180–181 (EK), and Ser191 each bind alpha-D-glucose 1-phosphate.

This sequence belongs to the bacterial/plant glucose-1-phosphate adenylyltransferase family. As to quaternary structure, homotetramer.

It carries out the reaction alpha-D-glucose 1-phosphate + ATP + H(+) = ADP-alpha-D-glucose + diphosphate. The protein operates within glycan biosynthesis; glycogen biosynthesis. In terms of biological role, involved in the biosynthesis of ADP-glucose, a building block required for the elongation reactions to produce glycogen. Catalyzes the reaction between ATP and alpha-D-glucose 1-phosphate (G1P) to produce pyrophosphate and ADP-Glc. The polypeptide is Glucose-1-phosphate adenylyltransferase (Clostridium acetobutylicum (strain ATCC 824 / DSM 792 / JCM 1419 / IAM 19013 / LMG 5710 / NBRC 13948 / NRRL B-527 / VKM B-1787 / 2291 / W)).